Reading from the N-terminus, the 352-residue chain is UDP-N-acetylglucosamine--N-acetylmuramyl-(pentapeptide) pyrophosphoryl-undecaprenol N-acetylglucosamine transferase 2 (352 aa).

Residues serine 11–glycine 13, arginine 164, serine 194, and glutamine 289 each bind UDP-N-acetyl-alpha-D-glucosamine.

This sequence belongs to the glycosyltransferase 28 family. MurG subfamily.

The protein resides in the cell membrane. The catalysed reaction is di-trans,octa-cis-undecaprenyl diphospho-N-acetyl-alpha-D-muramoyl-L-alanyl-D-glutamyl-meso-2,6-diaminopimeloyl-D-alanyl-D-alanine + UDP-N-acetyl-alpha-D-glucosamine = di-trans,octa-cis-undecaprenyl diphospho-[N-acetyl-alpha-D-glucosaminyl-(1-&gt;4)]-N-acetyl-alpha-D-muramoyl-L-alanyl-D-glutamyl-meso-2,6-diaminopimeloyl-D-alanyl-D-alanine + UDP + H(+). The protein operates within cell wall biogenesis; peptidoglycan biosynthesis. Its function is as follows. Cell wall formation. Catalyzes the transfer of a GlcNAc subunit on undecaprenyl-pyrophosphoryl-MurNAc-pentapeptide (lipid intermediate I) to form undecaprenyl-pyrophosphoryl-MurNAc-(pentapeptide)GlcNAc (lipid intermediate II). This Bacillus cereus (strain ATCC 10987 / NRS 248) protein is UDP-N-acetylglucosamine--N-acetylmuramyl-(pentapeptide) pyrophosphoryl-undecaprenol N-acetylglucosamine transferase 2.